The following is a 347-amino-acid chain: D-alanine--D-alanine ligase (347 aa).

The ATP-grasp domain occupies 134–332 (KLYAKDLGVK…LAQSLPKTPK (199 aa)). 161–216 (LMNFNFPFIIKPNNAGSSLGVNVVKEEKELVYALDGAFEYSKEVLIEPFIQGVKEY) provides a ligand contact to ATP. Residues D288, E300, and N302 each coordinate Mg(2+).

This sequence belongs to the D-alanine--D-alanine ligase family. It depends on Mg(2+) as a cofactor. Mn(2+) serves as cofactor.

The protein localises to the cytoplasm. It carries out the reaction 2 D-alanine + ATP = D-alanyl-D-alanine + ADP + phosphate + H(+). It participates in cell wall biogenesis; peptidoglycan biosynthesis. Cell wall formation. This Helicobacter pylori (strain ATCC 700392 / 26695) (Campylobacter pylori) protein is D-alanine--D-alanine ligase.